A 562-amino-acid polypeptide reads, in one-letter code: Formate--tetrahydrofolate ligase (562 aa).

Residue 77-84 (TPAGEGKS) participates in ATP binding.

Belongs to the formate--tetrahydrofolate ligase family.

The catalysed reaction is (6S)-5,6,7,8-tetrahydrofolate + formate + ATP = (6R)-10-formyltetrahydrofolate + ADP + phosphate. It participates in one-carbon metabolism; tetrahydrofolate interconversion. The chain is Formate--tetrahydrofolate ligase from Corynebacterium jeikeium (strain K411).